The sequence spans 349 residues: Isopentenyl-diphosphate delta-isomerase (349 aa).

6–7 (RK) contributes to the substrate binding site. Residues 62–64 (AMT), serine 93, and asparagine 122 contribute to the FMN site. Glutamine 152 is a binding site for substrate. Glutamate 153 serves as a coordination point for Mg(2+). Residues lysine 184, threonine 214, 258-259 (GG), and 280-281 (AG) contribute to the FMN site.

This sequence belongs to the IPP isomerase type 2 family. In terms of assembly, homooctamer. Dimer of tetramers. FMN serves as cofactor. Requires NADPH as cofactor. It depends on Mg(2+) as a cofactor.

The protein resides in the cytoplasm. The enzyme catalyses isopentenyl diphosphate = dimethylallyl diphosphate. Functionally, involved in the biosynthesis of isoprenoids. Catalyzes the 1,3-allylic rearrangement of the homoallylic substrate isopentenyl (IPP) to its allylic isomer, dimethylallyl diphosphate (DMAPP). The chain is Isopentenyl-diphosphate delta-isomerase from Bacillus cereus (strain AH820).